A 217-amino-acid polypeptide reads, in one-letter code: Uracil-DNA glycosylase (217 aa).

The active-site Proton acceptor is D62.

Belongs to the uracil-DNA glycosylase (UDG) superfamily. UNG family.

It localises to the cytoplasm. It carries out the reaction Hydrolyzes single-stranded DNA or mismatched double-stranded DNA and polynucleotides, releasing free uracil.. In terms of biological role, excises uracil residues from the DNA which can arise as a result of misincorporation of dUMP residues by DNA polymerase or due to deamination of cytosine. The polypeptide is Uracil-DNA glycosylase (Streptococcus pyogenes serotype M6 (strain ATCC BAA-946 / MGAS10394)).